We begin with the raw amino-acid sequence, 257 residues long: Phycoerythrobilin:ferredoxin oxidoreductase (257 aa).

Belongs to the HY2 family.

The enzyme catalyses (3Z)-phycoerythrobilin + oxidized 2[4Fe-4S]-[ferredoxin] = 15,16-dihydrobiliverdin + reduced 2[4Fe-4S]-[ferredoxin] + 2 H(+). Catalyzes the two-electron reduction of the C2 and C3(1) diene system of 15,16-dihydrobiliverdin. The chain is Phycoerythrobilin:ferredoxin oxidoreductase from Prochlorococcus marinus (strain MIT 9211).